The chain runs to 21 residues: Bibrotoxin (21 aa).

Disulfide bonds link C1/C15 and C3/C11.

It belongs to the endothelin/sarafotoxin family. In terms of tissue distribution, expressed by the venom gland.

It localises to the secreted. Functionally, vasoconstrictor activity. These toxins cause cardiac arrest probably as a result of coronary vasospasm. May act by displaying agonistic activities towards endothelin-1 and -2 receptors (EDNRA and EDNRB). This chain is Bibrotoxin, found in Atractaspis bibronii (Bibron's mole viper).